A 307-amino-acid polypeptide reads, in one-letter code: MNHSVVTEFIILGLTKKPELQGIIFLFFLIVYLVAFLGNMLIIIAKIYNNTLHTPMYVFLLTLAVVDIICTTSIIPKMLGTMLTSENTISYAGCMSQLFLFTWSLGAEMVLFTTMAYDRYVAICFPLHYSTIMNHHMCVALLSMVMAIAVTNSWVHTALIMRLTFCGPNTIDHFFCEIPPLLALSCSPVRINEVMVYVADITLAIGDFILTCISYGFIIVAILRIRTVEGKRKAFSTCSSHLTVVTLYYSPVIYTYIRPASSYTFERDKVVAALYTLVTPTLNPMVYSFQNREMQAGIRKVFAFLKH.

Residues Met1 to Gly22 lie on the Extracellular side of the membrane. Asn2 carries an N-linked (GlcNAc...) asparagine glycan. Residues Ile23 to Ile43 traverse the membrane as a helical segment. Residues Ile44–Thr51 are Cytoplasmic-facing. The helical transmembrane segment at Leu52–Thr72 threads the bilayer. At Ser73 to Ser96 the chain is on the extracellular side. An intrachain disulfide couples Cys94 to Cys186. A helical transmembrane segment spans residues Gln97–Tyr117. Residues Asp118–His136 lie on the Cytoplasmic side of the membrane. Residues Met137–Thr157 traverse the membrane as a helical segment. The Extracellular portion of the chain corresponds to Ala158 to Val194. Residues Met195–Ser214 form a helical membrane-spanning segment. At Tyr215–Ala234 the chain is on the cytoplasmic side. A helical transmembrane segment spans residues Phe235–Thr255. Residues Tyr256 to Asp268 are Extracellular-facing. Residues Lys269–Phe289 form a helical membrane-spanning segment. Over Gln290–His307 the chain is Cytoplasmic.

The protein belongs to the G-protein coupled receptor 1 family.

It is found in the cell membrane. Its function is as follows. Odorant receptor. The polypeptide is Olfactory receptor 13G1 (OR13G1) (Homo sapiens (Human)).